A 307-amino-acid chain; its full sequence is Zinc-alpha-2-glycoprotein (307 aa).

An N-terminal signal peptide occupies residues 1 to 17 (MVPVLLSLPLLLGPAVF). Glutamine 18 carries the pyrrolidone carboxylic acid modification. Cysteine 118 and cysteine 181 are disulfide-bonded. N-linked (GlcNAc...) asparagine glycosylation is found at asparagine 123, asparagine 190, and asparagine 254. An Ig-like C1-type domain is found at 202-287 (PTVTITSRVI…DHRGFSQSLS (86 aa)). Residues cysteine 220 and cysteine 275 are joined by a disulfide bond.

It belongs to the MHC class I family. Interacts with PIP.

The protein resides in the secreted. In terms of biological role, stimulates lipid degradation in adipocytes and causes the extensive fat losses associated with some advanced cancers. In Mus musculus (Mouse), this protein is Zinc-alpha-2-glycoprotein (Azgp1).